A 391-amino-acid polypeptide reads, in one-letter code: MKILIDENMPYAAELFGQLGEVVTKPGRTLSADDLIDIDALMIRSVTKVNHNLISKANKLQFVGTATAGQDHVDQALLAERGITFTSAPGCNKVGVAEYVLSALMVIGQQQGFSIFDKTIGIIGAGNVGSYLAQCLDALGIPYLLNDPIKEQEGDTRQFHSLEAIKAQCDVITVHTPITKDGEYPTHHLINEAFIDALQPDAILINAARGPVTDNQALKKALQLSQSGLGKKLTAVLDVFEFEPHVDLELLPLLAFATPHIAGYGLEGKARGTTMVFNRYCAFLNIDQAVEASSLLPIAPVPNVSLSRKWDDATLFSLIQLIYDIRKDDALFRRNMVVTKGNEAQMATAFDQMRKNYWDRREYSAITVTGKVGFGVESLAKLGFTVVEDIQ.

S45 and T67 together coordinate substrate. NAD(+) is bound by residues D147 and T176. R209 is an active-site residue. D238 serves as a coordination point for NAD(+). Residue E243 is part of the active site. Residue H260 is the Proton donor of the active site. G263 contributes to the NAD(+) binding site. Y264 is a substrate binding site.

Belongs to the D-isomer specific 2-hydroxyacid dehydrogenase family. PdxB subfamily. As to quaternary structure, homodimer.

It localises to the cytoplasm. The catalysed reaction is 4-phospho-D-erythronate + NAD(+) = (R)-3-hydroxy-2-oxo-4-phosphooxybutanoate + NADH + H(+). It functions in the pathway cofactor biosynthesis; pyridoxine 5'-phosphate biosynthesis; pyridoxine 5'-phosphate from D-erythrose 4-phosphate: step 2/5. Catalyzes the oxidation of erythronate-4-phosphate to 3-hydroxy-2-oxo-4-phosphonooxybutanoate. The sequence is that of Erythronate-4-phosphate dehydrogenase from Photobacterium profundum (strain SS9).